The primary structure comprises 367 residues: MSLADSVLAVNNDLPIRTDSPVHSGKVRSVYWLTDADSRRLIKTKGYNVPEDTPLAIMVISDRISAFDCIFHGEGGLKGIPGKGAALNAISNHWFKLFAENGLADSHILDIPHPFVWIVQKARPIKVEAICRQYITGSMWRAYSKGERVFCGITLPEGLEKDQKLPDLLITPSTKGILTGIPGVPAQDDINISRSDIEANYQAFGFEKLEDIDLYEKLLKDGFKVISKALADIDQVFVDTKFEFGYVTDKDGNSKLIYMDEVGTPDSSRIWDGAAYRDGKILENSKEGFRQFLLNHFPDPDVLLNKDRMPEREALARDNDLPLEAMMQVSRTYTGVAEKVTGAAIPLPANPKADIIKILREEYDLIL.

The protein belongs to the SAICAR synthetase family.

It catalyses the reaction 5-amino-1-(5-phospho-D-ribosyl)imidazole-4-carboxylate + L-aspartate + ATP = (2S)-2-[5-amino-1-(5-phospho-beta-D-ribosyl)imidazole-4-carboxamido]succinate + ADP + phosphate + 2 H(+). Its pathway is purine metabolism; IMP biosynthesis via de novo pathway; 5-amino-1-(5-phospho-D-ribosyl)imidazole-4-carboxamide from 5-amino-1-(5-phospho-D-ribosyl)imidazole-4-carboxylate: step 1/2. This is Phosphoribosylaminoimidazole-succinocarboxamide synthase from Shewanella sp. (strain W3-18-1).